We begin with the raw amino-acid sequence, 209 residues long: Large ribosomal subunit protein bL25 (209 aa).

Belongs to the bacterial ribosomal protein bL25 family. CTC subfamily. As to quaternary structure, part of the 50S ribosomal subunit; part of the 5S rRNA/L5/L18/L25 subcomplex. Contacts the 5S rRNA. Binds to the 5S rRNA independently of L5 and L18.

In terms of biological role, this is one of the proteins that binds to the 5S RNA in the ribosome where it forms part of the central protuberance. In Xanthomonas campestris pv. campestris (strain 8004), this protein is Large ribosomal subunit protein bL25.